We begin with the raw amino-acid sequence, 37 residues long: Large ribosomal subunit protein bL36 (37 aa).

It belongs to the bacterial ribosomal protein bL36 family.

In Acetivibrio thermocellus (strain ATCC 27405 / DSM 1237 / JCM 9322 / NBRC 103400 / NCIMB 10682 / NRRL B-4536 / VPI 7372) (Clostridium thermocellum), this protein is Large ribosomal subunit protein bL36.